A 354-amino-acid polypeptide reads, in one-letter code: Glutamine synthetase cytosolic isozyme 1-3 (354 aa).

S2 bears the N-acetylserine mark. Phosphoserine is present on residues S2 and S48. In terms of domain architecture, GS beta-grasp spans 19-99 (IIAEYIWIGG…VMCDAYTPAG (81 aa)). One can recognise a GS catalytic domain in the interval 106–354 (KRHNAAKIFS…SMIAETTILG (249 aa)).

Belongs to the glutamine synthetase family. Homooctamer. In terms of tissue distribution, expressed in the pericycle in the region of mature root.

Its subcellular location is the cytoplasm. It catalyses the reaction L-glutamate + NH4(+) + ATP = L-glutamine + ADP + phosphate + H(+). Functionally, low-affinity glutamine synthetase. May contribute to the homeostatic control of glutamine synthesis in roots. This is Glutamine synthetase cytosolic isozyme 1-3 (GLN1-3) from Arabidopsis thaliana (Mouse-ear cress).